Consider the following 451-residue polypeptide: MRKLISFDYSKALQFVSEKEIEYMERHAKLSLDMVLSKNAQGNDFLGWVSLPKDYDKAEFERIKKAAEKIKSDSDVLVVIGIGGSYLGARAAIEMLSHSFYNLLPKGKRNMPEIYFAGNSISSTYLSDLFELIEDKDVSINVISKSGTTTEPAIAFRVFRDFLEKKYGKEGAKSRIYVTTDRAKGALKKLADEEGYETFVIPDNVGGRYSVLTAVGLLPIAVAGISIDDMMQGAYDASTVYTKDNLNENISMQYAILRNILYRKGKAIEILVNYEPKLHYFSEWWKQLFGESEGKDNKGIYPASVDFTTDLHSMGQFIQEGSRNIFETVLNVEKPVKDIVINEDKDNIDGLNFLAGKTIDFVNKKAFEGTLLAHTDGNVPNLVVNIPEISAYYFGNLVYFFEMACAISGYINGVNPFDQPGVEAYKKNMFALLGKPGYEKEKELLEKRLGK.

E291 serves as the catalytic Proton donor. Residues H312 and K426 contribute to the active site.

The protein belongs to the GPI family.

The protein localises to the cytoplasm. The catalysed reaction is alpha-D-glucose 6-phosphate = beta-D-fructose 6-phosphate. The protein operates within carbohydrate biosynthesis; gluconeogenesis. Its pathway is carbohydrate degradation; glycolysis; D-glyceraldehyde 3-phosphate and glycerone phosphate from D-glucose: step 2/4. Catalyzes the reversible isomerization of glucose-6-phosphate to fructose-6-phosphate. The chain is Glucose-6-phosphate isomerase from Thermoanaerobacter sp. (strain X514).